The following is a 138-amino-acid chain: Small ribosomal subunit protein uS11c (138 aa).

Residues 1–22 (MAKSIPRISSRRNGRIGSGNNV) are disordered.

The protein belongs to the universal ribosomal protein uS11 family. In terms of assembly, part of the 30S ribosomal subunit.

The protein localises to the plastid. This is Small ribosomal subunit protein uS11c from Cuscuta reflexa (Southern Asian dodder).